A 380-amino-acid polypeptide reads, in one-letter code: F-box protein At4g18380 (380 aa).

The 49-residue stretch at 22–70 (IDHFDNLPDSILLLIFNNIGDVKALGRCSVVSKRFHSLIPQVENVFVRV) folds into the F-box domain.

This Arabidopsis thaliana (Mouse-ear cress) protein is F-box protein At4g18380.